A 564-amino-acid polypeptide reads, in one-letter code: CTP synthase (564 aa).

Residues 1–265 (MTKFVFVTGG…DEIVCHRLGI (265 aa)) are amidoligase domain. Ser-13 is a CTP binding site. Position 13 (Ser-13) interacts with UTP. ATP is bound by residues 14 to 19 (SLGKGI) and Asp-71. Residues Asp-71 and Glu-139 each coordinate Mg(2+). CTP-binding positions include 146-148 (DIE), 186-191 (KTKPTQ), and Lys-222. Residues 186–191 (KTKPTQ) and Lys-222 each bind UTP. The Glutamine amidotransferase type-1 domain occupies 290–543 (SIALVGKYVD…VRAAISFADK (254 aa)). Residue Gly-351 participates in L-glutamine binding. The active-site Nucleophile; for glutamine hydrolysis is the Cys-378. L-glutamine contacts are provided by residues 379–382 (LGMQ), Glu-402, and Arg-469. Residues His-516 and Glu-518 contribute to the active site.

This sequence belongs to the CTP synthase family. In terms of assembly, homotetramer.

The catalysed reaction is UTP + L-glutamine + ATP + H2O = CTP + L-glutamate + ADP + phosphate + 2 H(+). The enzyme catalyses L-glutamine + H2O = L-glutamate + NH4(+). It catalyses the reaction UTP + NH4(+) + ATP = CTP + ADP + phosphate + 2 H(+). The protein operates within pyrimidine metabolism; CTP biosynthesis via de novo pathway; CTP from UDP: step 2/2. With respect to regulation, allosterically activated by GTP, when glutamine is the substrate; GTP has no effect on the reaction when ammonia is the substrate. The allosteric effector GTP functions by stabilizing the protein conformation that binds the tetrahedral intermediate(s) formed during glutamine hydrolysis. Inhibited by the product CTP, via allosteric rather than competitive inhibition. Its function is as follows. Catalyzes the ATP-dependent amination of UTP to CTP with either L-glutamine or ammonia as the source of nitrogen. Regulates intracellular CTP levels through interactions with the four ribonucleotide triphosphates. In Nitrosomonas eutropha (strain DSM 101675 / C91 / Nm57), this protein is CTP synthase.